The sequence spans 148 residues: D-aminoacyl-tRNA deacylase (148 aa).

Residues 136-137 (GP) carry the Gly-cisPro motif, important for rejection of L-amino acids motif.

This sequence belongs to the DTD family. Homodimer.

The protein localises to the cytoplasm. The enzyme catalyses glycyl-tRNA(Ala) + H2O = tRNA(Ala) + glycine + H(+). It catalyses the reaction a D-aminoacyl-tRNA + H2O = a tRNA + a D-alpha-amino acid + H(+). An aminoacyl-tRNA editing enzyme that deacylates mischarged D-aminoacyl-tRNAs. Also deacylates mischarged glycyl-tRNA(Ala), protecting cells against glycine mischarging by AlaRS. Acts via tRNA-based rather than protein-based catalysis; rejects L-amino acids rather than detecting D-amino acids in the active site. By recycling D-aminoacyl-tRNA to D-amino acids and free tRNA molecules, this enzyme counteracts the toxicity associated with the formation of D-aminoacyl-tRNA entities in vivo and helps enforce protein L-homochirality. This Streptococcus mutans serotype c (strain ATCC 700610 / UA159) protein is D-aminoacyl-tRNA deacylase.